The sequence spans 442 residues: 3-isopropylmalate dehydratase large subunit (442 aa).

[4Fe-4S] cluster-binding residues include Xaa-347, Cys-407, and Cys-410.

The protein belongs to the aconitase/IPM isomerase family. LeuC type 1 subfamily. In terms of assembly, heterodimer of LeuC and LeuD. The cofactor is [4Fe-4S] cluster.

The catalysed reaction is (2R,3S)-3-isopropylmalate = (2S)-2-isopropylmalate. It participates in amino-acid biosynthesis; L-leucine biosynthesis; L-leucine from 3-methyl-2-oxobutanoate: step 2/4. In terms of biological role, catalyzes the isomerization between 2-isopropylmalate and 3-isopropylmalate, via the formation of 2-isopropylmaleate. This is 3-isopropylmalate dehydratase large subunit from Buchnera aphidicola subsp. Macrosiphoniella ludovicianae.